The sequence spans 738 residues: Zinc finger protein 235 (738 aa).

The 72-residue stretch at 8-79 (VTFKDVAVAF…ELQTQRGKHS (72 aa)) folds into the KRAB domain. The C2H2-type 1; degenerate zinc finger occupies 263–285 (YQGNECEEAFNDSSSLELHKQVH). 15 consecutive C2H2-type zinc fingers follow at residues 319-341 (YWCH…QRVH), 347-369 (YTCH…LPIH), 375-397 (YRCD…CRVH), 403-425 (YKCE…ERIH), 431-453 (YKCG…QRVH), 459-481 (YKCD…QRVH), 487-509 (YKCE…QRVH), 515-537 (FRCN…QRVH), 543-565 (YKCE…QRVH), 571-593 (YKCE…QSVH), 599-621 (FKCD…QRVH), 627-649 (YKCD…QIIH), 655-677 (FKCE…QRVH), 683-705 (YTCQ…QRVH), and 711-733 (YICD…QRVH).

Belongs to the krueppel C2H2-type zinc-finger protein family.

It is found in the nucleus. Its function is as follows. May be involved in transcriptional regulation. This Homo sapiens (Human) protein is Zinc finger protein 235 (ZNF235).